Consider the following 196-residue polypeptide: Segregation and condensation protein B (196 aa).

Belongs to the ScpB family. Homodimer. Homodimerization may be required to stabilize the binding of ScpA to the Smc head domains. Component of a cohesin-like complex composed of ScpA, ScpB and the Smc homodimer, in which ScpA and ScpB bind to the head domain of Smc. The presence of the three proteins is required for the association of the complex with DNA.

The protein resides in the cytoplasm. Participates in chromosomal partition during cell division. May act via the formation of a condensin-like complex containing Smc and ScpA that pull DNA away from mid-cell into both cell halves. This Lactobacillus johnsonii (strain CNCM I-12250 / La1 / NCC 533) protein is Segregation and condensation protein B.